Consider the following 185-residue polypeptide: MIDDTLLEAEEKMEKAIEVAKGDFGAIRTGRANAAMFHKIMVDYYGAPTPLQQLASFQIPEARSVLITPFDRAAMSEIEKALRNSDLGVNPGNDGNVIRIVLPQLTEERRKDYIKIARTKAEDARVSLRNVRRRAKEELDRIVKDGEAGEDEVGRAEKELEAVTKKHVDAIDELLKNKEAELLAV.

The protein belongs to the RRF family.

It is found in the cytoplasm. Responsible for the release of ribosomes from messenger RNA at the termination of protein biosynthesis. May increase the efficiency of translation by recycling ribosomes from one round of translation to another. The chain is Ribosome-recycling factor from Kineococcus radiotolerans (strain ATCC BAA-149 / DSM 14245 / SRS30216).